The primary structure comprises 436 residues: Acetyl-CoA decarbonylase/synthase complex subunit delta 2 (436 aa).

This sequence belongs to the CdhD family. Heterodimer of delta and gamma chains. The ACDS complex is made up of alpha, epsilon, beta, gamma and delta chains with a probable stoichiometry of (alpha(2)epsilon(2))(4)-beta(8)-(gamma(1)delta(1))(8) (Potential).

The protein operates within one-carbon metabolism; methanogenesis from acetate. Functionally, part of a complex that catalyzes the reversible cleavage of acetyl-CoA, allowing growth on acetate as sole source of carbon and energy. Probably maintains the overall quaternary structure of the ACDS complex. In Methanosarcina acetivorans (strain ATCC 35395 / DSM 2834 / JCM 12185 / C2A), this protein is Acetyl-CoA decarbonylase/synthase complex subunit delta 2 (cdhD2).